The following is a 342-amino-acid chain: Photosystem II assembly lipoprotein Ycf48 (342 aa).

An N-terminal signal peptide occupies residues 1-28 (MPVKFPSLKFEQLKQLVLVAAIAVFCVS). Cys-29 carries the N-palmitoyl cysteine lipid modification. A lipid anchor (S-diacylglycerol cysteine) is attached at Cys-29. Residues 196-220 (RGNFYSTWAPGQTEWTPHNRNSSRR) carry the Arg-rich patch motif. The propeptide occupies 340–342 (MVP).

It belongs to the Ycf48 family. As to quaternary structure, part of early PSII assembly complexes which includes D1 (psbA) and PsbI; not found in mature PSII. By two-hybrid analysis in yeast interacts with precursor and intermediate forms of D1, but less with mature D1. Binds to the lumenal side of PSI and PSII complexes. Coimmunoprecipitates with YidC. Purified chlorophyll- and carotenoid-containing photosystem II (PSII) assembly intermediate complex RCII* (iD1, D1, D2, PsbE, PsbF, PsbI, Ycf39, Ycf48, HliC and HliD). Post-translationally, the last 3 residues are removed in the mature protein.

Its subcellular location is the cellular thylakoid membrane. A factor required for optimal assembly of photosystem II (PSII) which acts in the early stages of PSII assembly. Also plays a role in replacement of photodamaged D1 (psbA). May interact with precursor D1 to prevent its premature processing before association with D2 (psbD). May also play a role in chlorophyll insertion into chlorophyll-binding proteins. Increasing levels of chlorophyll precursors partially suppresses deletion of this protein, supporting the idea that Ycf48 assists YidC in synthesis of chlorophyll-binding proteins. The Ycf39-Hlip complex binds D1 at an early stage of PSII assembly along with Ycf48, ribosomes and ChlG, the last enzyme in chlorophyll biosynthesis; it may be involved in chlorophyll reuse and delivery to D1 in the initial stages of PSII assembly. This Synechocystis sp. (strain ATCC 27184 / PCC 6803 / Kazusa) protein is Photosystem II assembly lipoprotein Ycf48.